The following is a 101-amino-acid chain: Small ribosomal subunit protein uS14 (101 aa).

Residues S33–R69 are disordered. The segment covering L51–G68 has biased composition (basic and acidic residues).

The protein belongs to the universal ribosomal protein uS14 family. Part of the 30S ribosomal subunit. Contacts proteins S3 and S10.

Functionally, binds 16S rRNA, required for the assembly of 30S particles and may also be responsible for determining the conformation of the 16S rRNA at the A site. The polypeptide is Small ribosomal subunit protein uS14 (Xanthomonas axonopodis pv. citri (strain 306)).